The primary structure comprises 356 residues: Chorismate synthase (356 aa).

Arg-44 contacts NADP(+). Residues 121–123 (HFS), Gly-278, 293–297 (KPTPS), and Arg-320 contribute to the FMN site.

It belongs to the chorismate synthase family. FMNH2 is required as a cofactor.

It carries out the reaction 5-O-(1-carboxyvinyl)-3-phosphoshikimate = chorismate + phosphate. Its pathway is metabolic intermediate biosynthesis; chorismate biosynthesis; chorismate from D-erythrose 4-phosphate and phosphoenolpyruvate: step 7/7. Catalyzes the anti-1,4-elimination of the C-3 phosphate and the C-6 proR hydrogen from 5-enolpyruvylshikimate-3-phosphate (EPSP) to yield chorismate, which is the branch point compound that serves as the starting substrate for the three terminal pathways of aromatic amino acid biosynthesis. This reaction introduces a second double bond into the aromatic ring system. This chain is Chorismate synthase, found in Pyrococcus abyssi (strain GE5 / Orsay).